A 677-amino-acid polypeptide reads, in one-letter code: Protein hook (677 aa).

Residues 6 to 123 enclose the Calponin-homology (CH) domain; sequence NEMYYSLLEW…RLLQLVLGCA (118 aa). Coiled coils occupy residues 135 to 436 and 478 to 588; these read EIMC…KCGH and QTAL…AKEV.

Belongs to the hook family. As to quaternary structure, homodimer. Interacts with microtubules via its N-terminus.

It is found in the cytoplasm. The protein resides in the cytoskeleton. The protein localises to the endosome. It localises to the synapse. Functionally, involved in endocytic trafficking by stabilizing organelles of the endocytic pathway. Probably acts as a cytoskeletal linker protein required to tether endosome vesicles to the cytoskeleton. Involved in modulation of endocytosis at stages required for down-regulation of membrane proteins that control synapse size. Not involved in synaptic vesicle recycling. Required in R7 cells for boss endocytosis into multivesicular bodies (MVBs). Has a role in regulating adult longevity. In Drosophila pseudoobscura pseudoobscura (Fruit fly), this protein is Protein hook.